Here is a 945-residue protein sequence, read N- to C-terminus: Isoleucine--tRNA ligase 1 (945 aa).

Residues 66 to 76 (PYANGDIHLGH) carry the 'HIGH' region motif. Glutamate 581 provides a ligand contact to L-isoleucyl-5'-AMP. A 'KMSKS' region motif is present at residues 622–626 (KMSKS). ATP is bound at residue lysine 625. Zn(2+)-binding residues include cysteine 908, cysteine 911, cysteine 928, and cysteine 931.

Belongs to the class-I aminoacyl-tRNA synthetase family. IleS type 1 subfamily. In terms of assembly, monomer. Zn(2+) serves as cofactor.

Its subcellular location is the cytoplasm. The catalysed reaction is tRNA(Ile) + L-isoleucine + ATP = L-isoleucyl-tRNA(Ile) + AMP + diphosphate. Its function is as follows. Catalyzes the attachment of isoleucine to tRNA(Ile). As IleRS can inadvertently accommodate and process structurally similar amino acids such as valine, to avoid such errors it has two additional distinct tRNA(Ile)-dependent editing activities. One activity is designated as 'pretransfer' editing and involves the hydrolysis of activated Val-AMP. The other activity is designated 'posttransfer' editing and involves deacylation of mischarged Val-tRNA(Ile). In Burkholderia mallei (strain ATCC 23344), this protein is Isoleucine--tRNA ligase 1.